A 140-amino-acid polypeptide reads, in one-letter code: Large ribosomal subunit protein uL11 (140 aa).

This sequence belongs to the universal ribosomal protein uL11 family. In terms of assembly, part of the ribosomal stalk of the 50S ribosomal subunit. Interacts with L10 and the large rRNA to form the base of the stalk. L10 forms an elongated spine to which L12 dimers bind in a sequential fashion forming a multimeric L10(L12)X complex. In terms of processing, one or more lysine residues are methylated.

Its function is as follows. Forms part of the ribosomal stalk which helps the ribosome interact with GTP-bound translation factors. The chain is Large ribosomal subunit protein uL11 from Halothermothrix orenii (strain H 168 / OCM 544 / DSM 9562).